The sequence spans 122 residues: Ribosome-binding factor A (122 aa).

Belongs to the RbfA family. As to quaternary structure, monomer. Binds 30S ribosomal subunits, but not 50S ribosomal subunits or 70S ribosomes.

The protein localises to the cytoplasm. In terms of biological role, one of several proteins that assist in the late maturation steps of the functional core of the 30S ribosomal subunit. Associates with free 30S ribosomal subunits (but not with 30S subunits that are part of 70S ribosomes or polysomes). Required for efficient processing of 16S rRNA. May interact with the 5'-terminal helix region of 16S rRNA. The polypeptide is Ribosome-binding factor A (Prosthecochloris aestuarii (strain DSM 271 / SK 413)).